A 315-amino-acid polypeptide reads, in one-letter code: D-erythronate dehydrogenase (315 aa).

Residues Ser-119, Tyr-143, and Lys-147 each contribute to the NAD(+) site. Tyr-143 functions as the Proton acceptor in the catalytic mechanism.

The protein belongs to the NAD(P)-dependent epimerase/dehydratase family.

It carries out the reaction D-erythronate + NAD(+) = 2-dehydro-D-erythronate + NADH + H(+). Functionally, catalyzes oxidation of D-erythronate to 2-oxo-tetronate. Can use either NAD(+) or NADP(+) as cosubstrate, with a preference for NAD(+). The polypeptide is D-erythronate dehydrogenase (Haemophilus influenzae (strain ATCC 51907 / DSM 11121 / KW20 / Rd)).